Reading from the N-terminus, the 258-residue chain is Acetylglutamate kinase (258 aa).

Substrate contacts are provided by residues 44–45, arginine 66, and asparagine 158; that span reads GG. Residues 181–186 and 209–211 each bind ATP; these read DVSGIL and IIT.

This sequence belongs to the acetylglutamate kinase family. ArgB subfamily. In terms of assembly, homodimer.

The protein localises to the cytoplasm. The enzyme catalyses N-acetyl-L-glutamate + ATP = N-acetyl-L-glutamyl 5-phosphate + ADP. Its pathway is amino-acid biosynthesis; L-arginine biosynthesis; N(2)-acetyl-L-ornithine from L-glutamate: step 2/4. Catalyzes the ATP-dependent phosphorylation of N-acetyl-L-glutamate. In Shigella flexneri, this protein is Acetylglutamate kinase.